The primary structure comprises 135 residues: T-cell receptor beta chain V region 3H.25 (135 aa).

An N-terminal signal peptide occupies residues 1–20 (MATRLLCYTVLCLLGARILN). Residues 21 to 115 (SKVIQTPRYL…SALYLCASSL (95 aa)) form a v segment region. Cysteines 42 and 111 form a disulfide. Positions 116 to 118 (FGT) are d segment. The interval 119–135 (SDYTFGSGTRLLVIGKA) is j segment.

The sequence is that of T-cell receptor beta chain V region 3H.25 from Mus musculus (Mouse).